The sequence spans 90 residues: uncharacterized protein (90 aa).

A signal peptide spans 1–20; it reads MEKLFVLVFALALLAFSSDA.

The protein localises to the secreted. This is an uncharacterized protein from Mus musculus (Mouse).